Here is a 358-residue protein sequence, read N- to C-terminus: uncharacterized protein (358 aa).

The segment at 1 to 47 (MGNVAGETRANVIPLHTNRSRVAARRRAGQRAESRQHPSLLSDPNDR) is disordered. The segment covering 18–29 (NRSRVAARRRAG) has biased composition (basic residues).

To M.leprae ML2427.

This is an uncharacterized protein from Mycobacterium tuberculosis (strain CDC 1551 / Oshkosh).